Reading from the N-terminus, the 194-residue chain is Imidazole glycerol phosphate synthase subunit HisH (194 aa).

The 192-residue stretch at 3–194 folds into the Glutamine amidotransferase type-1 domain; it reads RIAIVDLGIG…LILLRNFRRL (192 aa). The active-site Nucleophile is the cysteine 74. Catalysis depends on residues histidine 176 and glutamate 178.

Heterodimer of HisH and HisF.

It localises to the cytoplasm. It carries out the reaction 5-[(5-phospho-1-deoxy-D-ribulos-1-ylimino)methylamino]-1-(5-phospho-beta-D-ribosyl)imidazole-4-carboxamide + L-glutamine = D-erythro-1-(imidazol-4-yl)glycerol 3-phosphate + 5-amino-1-(5-phospho-beta-D-ribosyl)imidazole-4-carboxamide + L-glutamate + H(+). It catalyses the reaction L-glutamine + H2O = L-glutamate + NH4(+). It participates in amino-acid biosynthesis; L-histidine biosynthesis; L-histidine from 5-phospho-alpha-D-ribose 1-diphosphate: step 5/9. Its function is as follows. IGPS catalyzes the conversion of PRFAR and glutamine to IGP, AICAR and glutamate. The HisH subunit catalyzes the hydrolysis of glutamine to glutamate and ammonia as part of the synthesis of IGP and AICAR. The resulting ammonia molecule is channeled to the active site of HisF. This chain is Imidazole glycerol phosphate synthase subunit HisH, found in Pyrococcus furiosus (strain ATCC 43587 / DSM 3638 / JCM 8422 / Vc1).